Consider the following 530-residue polypeptide: Bifunctional purine biosynthesis protein PurH (530 aa).

In terms of domain architecture, MGS-like spans 2-150 (TDHPRRVTRA…KNHDDVAVVV (149 aa)).

This sequence belongs to the PurH family.

It carries out the reaction (6R)-10-formyltetrahydrofolate + 5-amino-1-(5-phospho-beta-D-ribosyl)imidazole-4-carboxamide = 5-formamido-1-(5-phospho-D-ribosyl)imidazole-4-carboxamide + (6S)-5,6,7,8-tetrahydrofolate. The enzyme catalyses IMP + H2O = 5-formamido-1-(5-phospho-D-ribosyl)imidazole-4-carboxamide. The protein operates within purine metabolism; IMP biosynthesis via de novo pathway; 5-formamido-1-(5-phospho-D-ribosyl)imidazole-4-carboxamide from 5-amino-1-(5-phospho-D-ribosyl)imidazole-4-carboxamide (10-formyl THF route): step 1/1. It functions in the pathway purine metabolism; IMP biosynthesis via de novo pathway; IMP from 5-formamido-1-(5-phospho-D-ribosyl)imidazole-4-carboxamide: step 1/1. The sequence is that of Bifunctional purine biosynthesis protein PurH from Bradyrhizobium diazoefficiens (strain JCM 10833 / BCRC 13528 / IAM 13628 / NBRC 14792 / USDA 110).